Consider the following 172-residue polypeptide: C-phycocyanin beta subunit (172 aa).

Position 72 is an N4-methylasparagine (Asn72). The (2R,3E)-phycocyanobilin site is built by Cys82 and Cys153.

Belongs to the phycobiliprotein family. In terms of assembly, the alpha and beta subunits exhibit high affinity for one another and form heterodimers. These heterodimers form heterohexamers of 3 alpha and 3 beta subunits which, in turn, aggregate into a heterododecamer consisting of 2 heterohexamers. Contains two covalently linked bilin chromophores.

It is found in the cellular thylakoid membrane. Its function is as follows. Light-harvesting photosynthetic bile pigment-protein from the phycobiliprotein complex (phycobilisome, PBS). Phycocyanin is the major phycobiliprotein in the PBS rod. The sequence is that of C-phycocyanin beta subunit (cpcB) from Arthrospira platensis (Spirulina platensis).